Consider the following 335-residue polypeptide: Hsp90 co-chaperone Cdc37-like 1 (335 aa).

The span at 1 to 11 shows a compositional bias: pro residues; the sequence is MEQPWPPPGPW. A disordered region spans residues 1–42; sequence MEQPWPPPGPWSFPRTGGETEEESDLDVSPSSSHYSPVPDGG. A self-association region spans residues 2-170; it reads EQPWPPPGPW…YEQKIRHFGM (169 aa). Low complexity predominate over residues 27 to 40; that stretch reads DVSPSSSHYSPVPD. Serine 32 and serine 88 each carry phosphoserine. The stretch at 84 to 120 forms a coiled coil; that stretch reads HNSESLDQEHAKAQTAVSELRQREEEWRQKEEALVQR. Positions 147 to 276 are self-association and interaction with Hsp90; that stretch reads KTEEEDKSQS…SRVRLYAQSQ (130 aa). Positions 266-335 are interaction with Hsp70; the sequence is KSRVRLYAQS…EDDDRMMDTV (70 aa). Residues 277–335 are required for interaction with STIP1; that stretch reads SLQPVTVQNHVPHSGVGCIGSLESLPQNPDSLQCCTPAPLCSVDSVVHKEDDDRMMDTV.

The protein belongs to the CDC37 family. In terms of assembly, self-associates. Forms complexes with Hsp70 and Hsp90. Interacts with CDC37, FKBP4, PPID and STIP1.

It localises to the cytoplasm. Its function is as follows. Co-chaperone that binds to numerous proteins and promotes their interaction with Hsp70 and Hsp90. The polypeptide is Hsp90 co-chaperone Cdc37-like 1 (Cdc37l1) (Mus musculus (Mouse)).